We begin with the raw amino-acid sequence, 359 residues long: Holliday junction branch migration complex subunit RuvB (359 aa).

A compositionally biased stretch (basic and acidic residues) spans 1–10; that stretch reads MPEHDPHQEN. Positions 1-20 are disordered; it reads MPEHDPHQENRTVSSVRLED. A large ATPase domain (RuvB-L) region spans residues 4–188; sequence HDPHQENRTV…FGIPLRLIFY (185 aa). ATP contacts are provided by residues Leu27, Arg28, Gly69, Lys72, Thr73, Thr74, 135–137, Arg178, Tyr188, and Arg225; that span reads EDF. Thr73 contacts Mg(2+). Positions 189 to 259 are small ATPAse domain (RuvB-S); sequence TASELELIVS…TADAALQRLE (71 aa). Positions 262–359 are head domain (RuvB-H); it reads SLGLDAMDRR…LLHRDGSADE (98 aa). Positions 298, 317, and 322 each coordinate DNA.

The protein belongs to the RuvB family. In terms of assembly, homohexamer. Forms an RuvA(8)-RuvB(12)-Holliday junction (HJ) complex. HJ DNA is sandwiched between 2 RuvA tetramers; dsDNA enters through RuvA and exits via RuvB. An RuvB hexamer assembles on each DNA strand where it exits the tetramer. Each RuvB hexamer is contacted by two RuvA subunits (via domain III) on 2 adjacent RuvB subunits; this complex drives branch migration. In the full resolvosome a probable DNA-RuvA(4)-RuvB(12)-RuvC(2) complex forms which resolves the HJ.

It is found in the cytoplasm. It carries out the reaction ATP + H2O = ADP + phosphate + H(+). Functionally, the RuvA-RuvB-RuvC complex processes Holliday junction (HJ) DNA during genetic recombination and DNA repair, while the RuvA-RuvB complex plays an important role in the rescue of blocked DNA replication forks via replication fork reversal (RFR). RuvA specifically binds to HJ cruciform DNA, conferring on it an open structure. The RuvB hexamer acts as an ATP-dependent pump, pulling dsDNA into and through the RuvAB complex. RuvB forms 2 homohexamers on either side of HJ DNA bound by 1 or 2 RuvA tetramers; 4 subunits per hexamer contact DNA at a time. Coordinated motions by a converter formed by DNA-disengaged RuvB subunits stimulates ATP hydrolysis and nucleotide exchange. Immobilization of the converter enables RuvB to convert the ATP-contained energy into a lever motion, pulling 2 nucleotides of DNA out of the RuvA tetramer per ATP hydrolyzed, thus driving DNA branch migration. The RuvB motors rotate together with the DNA substrate, which together with the progressing nucleotide cycle form the mechanistic basis for DNA recombination by continuous HJ branch migration. Branch migration allows RuvC to scan DNA until it finds its consensus sequence, where it cleaves and resolves cruciform DNA. The chain is Holliday junction branch migration complex subunit RuvB from Granulibacter bethesdensis (strain ATCC BAA-1260 / CGDNIH1).